Reading from the N-terminus, the 400-residue chain is E3 ubiquitin-protein ligase RNF149 (400 aa).

The N-terminal stretch at 1 to 32 (MAWRRREASVGARGVLALALLALALCVPGARG) is a signal peptide. Asn-52 and Asn-145 each carry an N-linked (GlcNAc...) asparagine glycan. In terms of domain architecture, PA spans 67-175 (SSPKEGAHGL…PKGREILELV (109 aa)). A helical transmembrane segment spans residues 201-221 (VVFVAIAFITMMIISLAWLIF). An RING-type; atypical zinc finger spans residues 269–310 (CAVCIENFKVKDIIRILPCKHIFHRICIDPWLLDHRTCPMCK). The tract at residues 325–400 (DVQEMPAPES…SDSRHGGPIS (76 aa)) is disordered. Residue Ser-345 is modified to Phosphoserine. Positions 356–368 (DSSPPSASPAESE) are enriched in low complexity. Residues 389-400 (GRSDSRHGGPIS) show a composition bias toward basic and acidic residues.

The protein localises to the membrane. The catalysed reaction is S-ubiquitinyl-[E2 ubiquitin-conjugating enzyme]-L-cysteine + [acceptor protein]-L-lysine = [E2 ubiquitin-conjugating enzyme]-L-cysteine + N(6)-ubiquitinyl-[acceptor protein]-L-lysine.. It functions in the pathway protein modification; protein ubiquitination. E3 ubiquitin-protein ligase. Ubiquitinates BRAF, inducing its proteasomal degradation. The sequence is that of E3 ubiquitin-protein ligase RNF149 (RNF149) from Homo sapiens (Human).